A 327-amino-acid polypeptide reads, in one-letter code: uncharacterized protein (327 aa).

One can recognise an S4 RNA-binding domain in the interval 12–79; sequence KRLDEFLAKE…LKKELDLEIE (68 aa). Asp136 is an active-site residue.

It belongs to the pseudouridine synthase RluA family.

The catalysed reaction is a uridine in RNA = a pseudouridine in RNA. This is an uncharacterized protein from Helicobacter pylori (strain ATCC 700392 / 26695) (Campylobacter pylori).